The following is a 156-amino-acid chain: Lipoprotein signal peptidase (156 aa).

3 helical membrane-spanning segments follow: residues F5–V25, Y64–L84, and I89–G109. Residues D113 and D130 contribute to the active site. A helical transmembrane segment spans residues N122–I142.

The protein belongs to the peptidase A8 family.

Its subcellular location is the cell inner membrane. It carries out the reaction Release of signal peptides from bacterial membrane prolipoproteins. Hydrolyzes -Xaa-Yaa-Zaa-|-(S,diacylglyceryl)Cys-, in which Xaa is hydrophobic (preferably Leu), and Yaa (Ala or Ser) and Zaa (Gly or Ala) have small, neutral side chains.. The protein operates within protein modification; lipoprotein biosynthesis (signal peptide cleavage). This protein specifically catalyzes the removal of signal peptides from prolipoproteins. The sequence is that of Lipoprotein signal peptidase from Campylobacter jejuni subsp. jejuni serotype O:2 (strain ATCC 700819 / NCTC 11168).